A 447-amino-acid polypeptide reads, in one-letter code: Tubulin beta-1 chain (447 aa).

GTP-binding residues include Gln11, Glu69, Ser138, Gly142, Thr143, Gly144, Asn204, and Asn226. Glu69 is a binding site for Mg(2+). The tract at residues 427-447 is disordered; sequence EATADEDAEFEEEQEAEVEEN. Acidic residues predominate over residues 429 to 447; it reads TADEDAEFEEEQEAEVEEN.

It belongs to the tubulin family. In terms of assembly, dimer of alpha and beta chains. A typical microtubule is a hollow water-filled tube with an outer diameter of 25 nm and an inner diameter of 15 nM. Alpha-beta heterodimers associate head-to-tail to form protofilaments running lengthwise along the microtubule wall with the beta-tubulin subunit facing the microtubule plus end conferring a structural polarity. Microtubules usually have 13 protofilaments but different protofilament numbers can be found in some organisms and specialized cells. The cofactor is Mg(2+).

The protein localises to the cytoplasm. It localises to the cytoskeleton. Tubulin is the major constituent of microtubules, a cylinder consisting of laterally associated linear protofilaments composed of alpha- and beta-tubulin heterodimers. Microtubules grow by the addition of GTP-tubulin dimers to the microtubule end, where a stabilizing cap forms. Below the cap, tubulin dimers are in GDP-bound state, owing to GTPase activity of alpha-tubulin. The protein is Tubulin beta-1 chain of Glossina morsitans morsitans (Savannah tsetse fly).